We begin with the raw amino-acid sequence, 876 residues long: MVKEKKKADKKGDKSARSPSSISDNPEAAKQEISASKQEVAPSAVIPVLETPLKQTPKRDSEHTYQSEDETQYEEPILTKLIVESYEGEKVRGLYEGEGFAVFQGGNTYHGMFSEGLMHGQGTYIWADGLKYEGDFVKNIPMNHGVYTWPDGSTYEGEVVNGMRNGFGMFKCGTQPVSYIGHWCHGKRHGKGSIYYNQEGTSWYEGDWVYNIKKGWGIRCYKSGNIYEGQWENNMRHGEGRMRWLTTNEEYTGHWEKGIQNGFGTHTWFLKRIPNSQYPLRNEYIGAFVNGFRHGQGKFYYASGAMYEGEWVSNKKQGRGRITFKNGRVYEGLFSNDHIAQFFEAEMDYSYSLDRRSDISQRSRQARGSSVSADREPETLRKLDGSESRSVLGSSIELDLNLLLDMYPEESQEEEKKQVEYAVLRNITELRRIYCFYSGLGCDHSLDNTFLMTKLHFWRFLKDCRFHHHNITLADMDRVLSVYNGIPIEEIHSPFRTILLRTFLNYLLQLAYYIHHKEFQNRSPSLFLCFTKLMAENIHPHACQVKGHLFNEQQRTLYSMNYIDKCWEIYTAYCRPNEAPPYELTMKMRYFLWMLKDFRMINKELTATKFMRVIAEDNPFVYDGMDSNFELELVFLEFFEALLCFSLCCMFDQMTRSYLKAPYDDVTTNRYGSTQTVLNQSIHRSPSGATSHDSEVHFSSTKSSLDKIGVLPDGKIRQSEPKLKKSLSEDKVSKMNLKAQGRGLVFMSPHGEKYEKSKDEQKEKLNMWVNNLYVFFVSVLFSAYKHEEALKEKVEENRLQEAVLAQQKQIENEELEARLNILREEEARRQDFELDITVLKEPPEVPAVQPLTPSPPKEDLVSMQTSKASPGKKKKK.

Composition is skewed to basic and acidic residues over residues 1–16 (MVKE…DKSA) and 57–66 (PKRDSEHTYQ). A disordered region spans residues 1–72 (MVKEKKKADK…HTYQSEDETQ (72 aa)). MORN repeat units lie at residues 86–108 (YEGE…GGNT), 109–131 (YHGM…DGLK), 132–154 (YEGD…DGST), 155–177 (YEGE…TQPV), 179–201 (YIGH…QEGT), 204–226 (YEGD…SGNI), 227–249 (YEGQ…TTNE), 251–273 (YTGH…LKRI), 284–306 (YIGA…SGAM), and 307–329 (YEGE…NGRV). Disordered regions lie at residues 360–386 (SQRS…LDGS) and 841–876 (EPPE…KKKK). Residues 373 to 386 (ADREPETLRKLDGS) show a composition bias toward basic and acidic residues. A coiled-coil region spans residues 752–841 (EKYEKSKDEQ…FELDITVLKE (90 aa)).

In terms of assembly, interacts with RSPH6A. Does not appear to be part of the axonemal radial spoke complexes 1 or 2.

The protein resides in the cytoplasm. Its subcellular location is the cytoskeleton. It localises to the cilium axoneme. The protein localises to the cell projection. It is found in the cilium. The protein resides in the flagellum. Its function is as follows. May function as part of the axonemal radial spoke complex 3 (RS3). Radial spoke complexes are important for ciliary motility. In Rattus norvegicus (Rat), this protein is Radial spoke head 10 homolog B (Rsph10b).